The sequence spans 186 residues: Mitoferrin-2B (186 aa).

One copy of the Solcar repeat lies at 75-163 (SNVTAHMLAG…FACYEKLKKT (89 aa)). 3 helical membrane passes run 77-96 (VTAH…CLMY), 137-157 (RGLN…FACY), and 172-185 (GNCH…NSCP).

The protein belongs to the mitochondrial carrier (TC 2.A.29) family.

It is found in the mitochondrion inner membrane. It catalyses the reaction Fe(2+)(in) = Fe(2+)(out). In terms of biological role, mitochondrial iron transporter that mediates iron uptake. Probably required for heme synthesis of hemoproteins and Fe-S cluster assembly in non-erythroid cells. The sequence is that of Mitoferrin-2B (slc25a28-b) from Xenopus laevis (African clawed frog).